We begin with the raw amino-acid sequence, 112 residues long: C-X-C motif chemokine 6 (112 aa).

An N-terminal signal peptide occupies residues 1 to 36 (MRLLSSRAARVSGPSGSLCALLALLLLTPPGPLASA). Disulfide bonds link C48–C74 and C50–C90.

This sequence belongs to the intercrine alpha (chemokine CxC) family.

The protein localises to the secreted. Chemotactic for neutrophil granulocytes. Signals through binding and activation of its receptors (CXCR1 and CXCR2). In addition to its chemotactic and angiogenic properties, it has strong antibacterial activity against Gram-positive and Gram-negative bacteria (90-fold-higher when compared to CXCL5 and CXCL7). This Bos taurus (Bovine) protein is C-X-C motif chemokine 6 (CXCL6).